The following is a 226-amino-acid chain: ATP synthase F(0) complex subunit a (226 aa).

6 consecutive transmembrane segments (helical) span residues proline 12–proline 32, tryptophan 68–leucine 88, glutamine 97–phenylalanine 117, isoleucine 135–alanine 155, isoleucine 164–isoleucine 184, and alanine 189–isoleucine 209.

Belongs to the ATPase A chain family. In terms of assembly, component of the ATP synthase complex composed at least of ATP5F1A/subunit alpha, ATP5F1B/subunit beta, ATP5MC1/subunit c (homooctomer), MT-ATP6/subunit a, MT-ATP8/subunit 8, ATP5ME/subunit e, ATP5MF/subunit f, ATP5MG/subunit g, ATP5MK/subunit k, ATP5MJ/subunit j, ATP5F1C/subunit gamma, ATP5F1D/subunit delta, ATP5F1E/subunit epsilon, ATP5PF/subunit F6, ATP5PB/subunit b, ATP5PD/subunit d, ATP5PO/subunit OSCP. ATP synthase complex consists of a soluble F(1) head domain (subunits alpha(3) and beta(3)) - the catalytic core - and a membrane F(0) domain - the membrane proton channel (subunits c, a, 8, e, f, g, k and j). These two domains are linked by a central stalk (subunits gamma, delta, and epsilon) rotating inside the F1 region and a stationary peripheral stalk (subunits F6, b, d, and OSCP). Interacts with DNAJC30; interaction is direct.

Its subcellular location is the mitochondrion inner membrane. The catalysed reaction is H(+)(in) = H(+)(out). Its function is as follows. Subunit a, of the mitochondrial membrane ATP synthase complex (F(1)F(0) ATP synthase or Complex V) that produces ATP from ADP in the presence of a proton gradient across the membrane which is generated by electron transport complexes of the respiratory chain. ATP synthase complex consist of a soluble F(1) head domain - the catalytic core - and a membrane F(1) domain - the membrane proton channel. These two domains are linked by a central stalk rotating inside the F(1) region and a stationary peripheral stalk. During catalysis, ATP synthesis in the catalytic domain of F(1) is coupled via a rotary mechanism of the central stalk subunits to proton translocation. With the subunit c (ATP5MC1), forms the proton-conducting channel in the F(0) domain, that contains two crucial half-channels (inlet and outlet) that facilitate proton movement from the mitochondrial intermembrane space (IMS) into the matrix. Protons are taken up via the inlet half-channel and released through the outlet half-channel, following a Grotthuss mechanism. The chain is ATP synthase F(0) complex subunit a from Equus asinus (Donkey).